The chain runs to 71 residues: 8.6 kDa protein (71 aa).

The chain is 8.6 kDa protein from Pseudomonas phage Pf1 (Bacteriophage Pf1).